The chain runs to 249 residues: 5'-nucleotidase SurE (249 aa).

Residues Asp9, Asp10, Ser40, and Asn92 each contribute to the a divalent metal cation site.

It belongs to the SurE nucleotidase family. A divalent metal cation is required as a cofactor.

It localises to the cytoplasm. The enzyme catalyses a ribonucleoside 5'-phosphate + H2O = a ribonucleoside + phosphate. Functionally, nucleotidase that shows phosphatase activity on nucleoside 5'-monophosphates. This chain is 5'-nucleotidase SurE, found in Shewanella frigidimarina (strain NCIMB 400).